The primary structure comprises 256 residues: Large ribosomal subunit protein eL8y (256 aa).

A compositionally biased stretch (basic residues) spans 1 to 15 (MAPKKGVKVASKKKP). The disordered stretch occupies residues 1-20 (MAPKKGVKVASKKKPEKVTN).

The protein belongs to the eukaryotic ribosomal protein eL8 family.

This chain is Large ribosomal subunit protein eL8y (RPL7AB), found in Arabidopsis thaliana (Mouse-ear cress).